Reading from the N-terminus, the 444-residue chain is Probable glycine dehydrogenase (decarboxylating) subunit 1 (444 aa).

The protein belongs to the GcvP family. N-terminal subunit subfamily. The glycine cleavage system is composed of four proteins: P, T, L and H. In this organism, the P 'protein' is a heterodimer of two subunits.

The enzyme catalyses N(6)-[(R)-lipoyl]-L-lysyl-[glycine-cleavage complex H protein] + glycine + H(+) = N(6)-[(R)-S(8)-aminomethyldihydrolipoyl]-L-lysyl-[glycine-cleavage complex H protein] + CO2. Its function is as follows. The glycine cleavage system catalyzes the degradation of glycine. The P protein binds the alpha-amino group of glycine through its pyridoxal phosphate cofactor; CO(2) is released and the remaining methylamine moiety is then transferred to the lipoamide cofactor of the H protein. The polypeptide is Probable glycine dehydrogenase (decarboxylating) subunit 1 (Carboxydothermus hydrogenoformans (strain ATCC BAA-161 / DSM 6008 / Z-2901)).